The chain runs to 353 residues: Nicotinate-nucleotide--dimethylbenzimidazole phosphoribosyltransferase (353 aa).

Catalysis depends on E318, which acts as the Proton acceptor.

It belongs to the CobT family.

It catalyses the reaction 5,6-dimethylbenzimidazole + nicotinate beta-D-ribonucleotide = alpha-ribazole 5'-phosphate + nicotinate + H(+). Its pathway is nucleoside biosynthesis; alpha-ribazole biosynthesis; alpha-ribazole from 5,6-dimethylbenzimidazole: step 1/2. Its function is as follows. Catalyzes the synthesis of alpha-ribazole-5'-phosphate from nicotinate mononucleotide (NAMN) and 5,6-dimethylbenzimidazole (DMB). The chain is Nicotinate-nucleotide--dimethylbenzimidazole phosphoribosyltransferase from Chloroflexus aggregans (strain MD-66 / DSM 9485).